Here is a 91-residue protein sequence, read N- to C-terminus: ATP synthase subunit c (91 aa).

A run of 2 helical transmembrane segments spans residues 4-24 and 53-73; these read FTMC…GTGI and IGLA…LIIL.

The protein belongs to the ATPase C chain family. As to quaternary structure, F-type ATPases have 2 components, F(1) - the catalytic core - and F(0) - the membrane proton channel. F(1) has five subunits: alpha(3), beta(3), gamma(1), delta(1), epsilon(1). F(0) has three main subunits: a(1), b(2) and c(10-14). The alpha and beta chains form an alternating ring which encloses part of the gamma chain. F(1) is attached to F(0) by a central stalk formed by the gamma and epsilon chains, while a peripheral stalk is formed by the delta and b chains.

It is found in the cell inner membrane. Its function is as follows. F(1)F(0) ATP synthase produces ATP from ADP in the presence of a proton or sodium gradient. F-type ATPases consist of two structural domains, F(1) containing the extramembraneous catalytic core and F(0) containing the membrane proton channel, linked together by a central stalk and a peripheral stalk. During catalysis, ATP synthesis in the catalytic domain of F(1) is coupled via a rotary mechanism of the central stalk subunits to proton translocation. Key component of the F(0) channel; it plays a direct role in translocation across the membrane. A homomeric c-ring of between 10-14 subunits forms the central stalk rotor element with the F(1) delta and epsilon subunits. This Geobacter sulfurreducens (strain ATCC 51573 / DSM 12127 / PCA) protein is ATP synthase subunit c.